The sequence spans 282 residues: HTH-type transcriptional activator RhaR (282 aa).

One can recognise an HTH araC/xylS-type domain in the interval 179-277 (DKLITRLAAS…GMTPSQWRHL (99 aa)). DNA-binding regions (H-T-H motif) lie at residues 196–217 (DKFC…RQQT) and 244–267 (ISDI…TRET).

As to quaternary structure, binds DNA as a dimer.

The protein resides in the cytoplasm. Activates expression of the rhaSR operon in response to L-rhamnose. The polypeptide is HTH-type transcriptional activator RhaR (Escherichia coli (strain K12 / MC4100 / BW2952)).